Here is a 636-residue protein sequence, read N- to C-terminus: 1-deoxy-D-xylulose-5-phosphate synthase (636 aa).

Residues His72 and 113 to 115 (GHA) contribute to the thiamine diphosphate site. Residue Asp144 coordinates Mg(2+). Thiamine diphosphate is bound by residues 145-146 (GS), Asn174, Tyr287, and Glu370. A Mg(2+)-binding site is contributed by Asn174.

Belongs to the transketolase family. DXPS subfamily. Homodimer. Requires Mg(2+) as cofactor. Thiamine diphosphate is required as a cofactor.

The catalysed reaction is D-glyceraldehyde 3-phosphate + pyruvate + H(+) = 1-deoxy-D-xylulose 5-phosphate + CO2. It participates in metabolic intermediate biosynthesis; 1-deoxy-D-xylulose 5-phosphate biosynthesis; 1-deoxy-D-xylulose 5-phosphate from D-glyceraldehyde 3-phosphate and pyruvate: step 1/1. Functionally, catalyzes the acyloin condensation reaction between C atoms 2 and 3 of pyruvate and glyceraldehyde 3-phosphate to yield 1-deoxy-D-xylulose-5-phosphate (DXP). This Synechococcus sp. (strain ATCC 27144 / PCC 6301 / SAUG 1402/1) (Anacystis nidulans) protein is 1-deoxy-D-xylulose-5-phosphate synthase.